Consider the following 70-residue polypeptide: Small ribosomal subunit protein bS21B (70 aa).

Residues 37–70 are disordered; the sequence is SYEKPTTERKRKKAAAVARLRKQVRRSMPPKKKY. Residues 45–70 show a composition bias toward basic residues; it reads RKRKKAAAVARLRKQVRRSMPPKKKY.

The protein belongs to the bacterial ribosomal protein bS21 family.

The sequence is that of Small ribosomal subunit protein bS21B from Burkholderia pseudomallei (strain K96243).